A 335-amino-acid chain; its full sequence is Pyridoxal 5'-phosphate synthase subunit PdxS (335 aa).

A D-ribose 5-phosphate-binding site is contributed by Asp30. Catalysis depends on Lys87, which acts as the Schiff-base intermediate with D-ribose 5-phosphate. A D-ribose 5-phosphate-binding site is contributed by Gly159. Arg171 lines the D-glyceraldehyde 3-phosphate pocket. D-ribose 5-phosphate is bound by residues Gly257 and 278–279; that span reads GS.

The protein belongs to the PdxS/SNZ family. Homohexamer. In the presence of PdxT, forms a dodecamer of heterodimers.

The catalysed reaction is aldehydo-D-ribose 5-phosphate + D-glyceraldehyde 3-phosphate + L-glutamine = pyridoxal 5'-phosphate + L-glutamate + phosphate + 3 H2O + H(+). It functions in the pathway cofactor biosynthesis; pyridoxal 5'-phosphate biosynthesis. Catalyzes the formation of pyridoxal 5'-phosphate from ribose 5-phosphate (RBP), glyceraldehyde 3-phosphate (G3P) and ammonia. The ammonia is provided by the PdxT subunit. Can also use ribulose 5-phosphate and dihydroxyacetone phosphate as substrates, resulting from enzyme-catalyzed isomerization of RBP and G3P, respectively. The chain is Pyridoxal 5'-phosphate synthase subunit PdxS from Pyrococcus horikoshii (strain ATCC 700860 / DSM 12428 / JCM 9974 / NBRC 100139 / OT-3).